A 45-amino-acid polypeptide reads, in one-letter code: Osteocalcin (45 aa).

The Gla domain occupies 1–41 (AAGELTLTQLESLREVCEANLACEDMMDAQGIIAAYTAYYG). Glu11, Glu15, Glu18, and Glu24 together coordinate Ca(2+). 4-carboxyglutamate is present on residues Glu11, Glu15, and Glu18. A disulfide bridge links Cys17 with Cys23.

Belongs to the osteocalcin/matrix Gla protein family. Gamma-carboxyglutamate residues are formed by vitamin K dependent carboxylation by GGCX. These residues are essential for the binding of calcium. Also found in smaller quantities in dentin.

The protein resides in the secreted. The carboxylated form is one of the main organic components of the bone matrix, which constitutes 1-2% of the total bone protein. The carboxylated form binds strongly to apatite and calcium. The chain is Osteocalcin (bglap) from Lepomis macrochirus (Bluegill).